Here is a 1044-residue protein sequence, read N- to C-terminus: Outer dynein arm-docking complex subunit 2 (1044 aa).

Basic and acidic residues-rich tracts occupy residues 317-338 (IKFSEQPQKDQPNEAPKEEVAI) and 379-401 (SKDRNTLRDTQVEKHGGKLEKSR). 2 disordered regions span residues 317–409 (IKFS…PGRA) and 423–446 (ISDSSSESEEDEEQPDHRQEANAD). HEAT repeat units follow at residues 448-485 (PSEYWQIQKLVKYLKGGNQTATVIALCSMKDFNLAQET), 487-527 (QLAI…NPQI), 530-568 (NIVDLGGLPVMVNILDSPHKSLKCLAAETIANVAKFRRA), 627-665 (AIRKAGGIPLLARLLKTSHENMLIPVVGTLQECASEENY), and 668-706 (AIKAERIIENLVKNLNSENEQLQEHCAMAIYQCAEDEET). ARM repeat units lie at residues 484 to 523 (ETCQLAIRDVGGLEVLINLLETDEVKCKIGSLKILKEISH), 525 to 564 (PQIRRNIVDLGGLPVMVNILDSPHKSLKCLAAETIANVAK), 535 to 577 (GGLP…RHGG), 622 to 661 (YANKEAIRKAGGIPLLARLLKTSHENMLIPVVGTLQECAS), 663 to 702 (ENYRAAIKAERIIENLVKNLNSENEQLQEHCAMAIYQCAE), 746 to 785 (KENVTKFREYKAIETLVGLLTDQPEEVLVNVVGALGECCQ), 828 to 867 (PESMMIIDRLDGVRLLWSLLKNPHPDVKASAAWALCPCIQ), 871 to 910 (DAGEMVRSFVGGLELVVNLLKSDNKEVLASVCAVITNIAK), 912 to 951 (QENLAVITDHGVVPLLSKLANTNNDKLRRHLAETISRCCM), 953 to 992 (GRNRVAFGEHKAVAPLVRYLKSNDTNVHRATAQALYQLSE), and 1004 to 1031 (GAVKLLLDMVGSPDEELQEAAAGCISNI). HEAT repeat units follow at residues 831–870 (MMIIDRLDGVRLLWSLLKNPHPDVKASAAWALCPCIQNAK), 874–914 (EMVR…DQEN), 916–955 (AVITDHGVVPLLSKLANTNNDKLRRHLAETISRCCMWGRN), 958–996 (AFGEHKAVAPLVRYLKSNDTNVHRATAQALYQLSEDADN), and 999–1037 (TMHENGAVKLLLDMVGSPDEELQEAAAGCISNIRRLALA).

Component of the outer dynein arm-docking complex along with ODAD1, ODAD3, ODAD4 and CLXN. Interacts with CFAP61. As to expression, expressed in trachea multiciliated cells.

It localises to the cytoplasm. Its subcellular location is the cytoskeleton. It is found in the cilium axoneme. The protein resides in the cilium basal body. Functionally, component of the outer dynein arm-docking complex (ODA-DC) that mediates outer dynein arms (ODA) binding onto the doublet microtubule. Involved in mediating assembly of both ODAs and their axonemal docking complex onto ciliary microtubules. The chain is Outer dynein arm-docking complex subunit 2 (ODAD2) from Bos taurus (Bovine).